A 288-amino-acid chain; its full sequence is Protease HtpX (288 aa).

Helical transmembrane passes span 4–24 and 33–53; these read ILLFLATNFAVLFVFNIILTL and VGLLIFATLFGFTGSIISLLM. H139 provides a ligand contact to Zn(2+). The active site involves E140. Zn(2+) is bound at residue H143. Transmembrane regions (helical) follow at residues 146–166 and 186–206; these read SGDMVTMTLLQGVLNTFVIFI and IYFMISMVLELVFGVLASMIA. Position 214 (E214) interacts with Zn(2+).

The protein belongs to the peptidase M48B family. The cofactor is Zn(2+).

The protein resides in the cell inner membrane. This is Protease HtpX from Histophilus somni (strain 2336) (Haemophilus somnus).